The following is a 291-amino-acid chain: Trimeric intracellular cation channel type B (291 aa).

Residues 1 to 19 lie on the Lumenal side of the membrane; the sequence is MDSPWDELALAFSRTSMFP. The helical transmembrane segment at 20–33 threads the bilayer; that stretch reads FFDIAHYLVSVMAV. Residues 34 to 50 are Cytoplasmic-facing; that stretch reads KRQPGAAALAWKNPISS. A helical membrane pass occupies residues 51 to 70; the sequence is WFTAMLHCFGGGILSCLLLA. The Lumenal portion of the chain corresponds to 71–82; the sequence is EPPLKFLANHTN. The helical transmembrane segment at 83–99 threads the bilayer; that stretch reads ILLASSIWYITFFCPHD. The Cytoplasmic portion of the chain corresponds to 100-104; sequence LVSQG. The helical transmembrane segment at 105–121 threads the bilayer; it reads YSYLPVQLLASGMKEVT. 2 residues coordinate a 1,2-diacyl-sn-glycero-3-phospho-(1D-myo-inositol-4,5-bisphosphate): Lys-118 and Arg-122. Topologically, residues 122–139 are lumenal; it reads RTWKIVGGVTHANSYYKN. The helical transmembrane segment at 140-156 threads the bilayer; that stretch reads GWIVMIAIGWARGAGGT. The Cytoplasmic segment spans residues 157-179; sequence IITNFERLVKGDWKPEGDEWLKM. The helical transmembrane segment at 180–195 threads the bilayer; it reads SYPAKVTLLGSVIFTF. The Lumenal portion of the chain corresponds to 196–207; that stretch reads QHTQHLAISKHN. The helical transmembrane segment at 208–227 threads the bilayer; it reads LMFLYTIFIVATKITMMTTQ. Residues 228-291 are Cytoplasmic-facing; it reads TSTMTFAPFE…VKKKHTKKNE (64 aa). A disordered region spans residues 256-291; the sequence is KKSEAKSPSNGVGSLASKPVDVASDNVKKKHTKKNE. Ser-262 bears the Phosphoserine mark.

It belongs to the TMEM38 family. As to quaternary structure, homotrimer; conformation seems to be controled by binding to diacylglycerol (DAG).

It is found in the endoplasmic reticulum membrane. The enzyme catalyses K(+)(in) = K(+)(out). Its activity is regulated as follows. Channel activity is activated by increased cytosolic Ca(2+) levels and blocked by luminal high Ca(2+) levels. Its function is as follows. Intracellular monovalent cation channel required for maintenance of rapid intracellular calcium release. Acts as a potassium counter-ion channel that functions in synchronization with calcium release from intracellular stores. Activated by increased cytosolic Ca(2+) levels. In Homo sapiens (Human), this protein is Trimeric intracellular cation channel type B.